We begin with the raw amino-acid sequence, 237 residues long: Protein-S-isoprenylcysteine O-methyltransferase (237 aa).

Helical transmembrane passes span 26–46 (SSAI…LFIF), 53–73 (FGIY…WVTM), 92–112 (FNMA…FFPS), and 116–136 (FSLW…RSVA). S-adenosyl-L-methionine contacts are provided by residues Gln-149, 156 to 159 (HVLV), Tyr-164, and 169 to 172 (HPSY). The helical transmembrane segment at 184-204 (VILMNPISIIGFGWASWSFFS) threads the bilayer. Arg-206 contributes to the substrate binding site. Glu-210 is a binding site for S-adenosyl-L-methionine.

It belongs to the class VI-like SAM-binding methyltransferase superfamily. Isoprenylcysteine carboxyl methyltransferase family.

The protein resides in the endoplasmic reticulum membrane. It catalyses the reaction [protein]-C-terminal S-[(2E,6E)-farnesyl]-L-cysteine + S-adenosyl-L-methionine = [protein]-C-terminal S-[(2E,6E)-farnesyl]-L-cysteine methyl ester + S-adenosyl-L-homocysteine. Its function is as follows. Methylates the C-terminal cysteine residues of small GTPases and the heterotrimeric G protein gamma subunit in response to cAMP. The methylation is required for intercellular signaling and regulation of cAMP waves propagation. It also seems to induce the activity of car1, a G protein-coupled receptor which senses extracellular cAMP during the aggregation phase of development. This chain is Protein-S-isoprenylcysteine O-methyltransferase (icmt-1), found in Dictyostelium discoideum (Social amoeba).